A 364-amino-acid polypeptide reads, in one-letter code: MSRNLIYRRNRALCFVLILFCFPYRFGARNTPEAEQSTAKATQIIHVSNSTWHDFSRLVDVQIGSHVSGVSELKRYLHRFGYVNDGSEIFSDVFDGPLESAISLYQENLGLPITGRLDTSTVTLMSLPRCGVSDTHMTINNDFLHTTAHYTYFNGKPKWNRDTLTYAISKTHKLDYLTSEDVKTVFRRAFSQWSSVIPVSFEEVDDFTTADLKIGFYAGDHGDGLPFDGVLGTLAHAFAPENGRLHLDAAETWIVDDDLKGSSEVAVDLESVATHEIGHLLGLGHSSQESAVMYPSLRPRTKKVDLTVDDVAGVLKLYGPNPKLRLDSLTQSEDSIKNGTVSHRFLSGNFIGYVLLVVGLILFL.

Residues 1–28 (MSRNLIYRRNRALCFVLILFCFPYRFGA) form the signal peptide. A propeptide spans 29–149 (RNTPEAEQST…NNDFLHTTAH (121 aa)) (activation peptide). Asn-49 carries N-linked (GlcNAc...) asparagine glycosylation. Positions 128–135 (PRCGVSDT) match the Cysteine switch motif. A Zn(2+)-binding site is contributed by Cys-130. Asp-211 is a binding site for Ca(2+). Residues His-221 and Asp-223 each coordinate Zn(2+). Ca(2+) is bound by residues Asp-228 and Gly-229. His-236 serves as a coordination point for Zn(2+). Gly-243 provides a ligand contact to Ca(2+). Position 246 (His-246) interacts with Zn(2+). 2 residues coordinate Ca(2+): Asp-248 and Glu-251. A Zn(2+)-binding site is contributed by His-275. Glu-276 is a catalytic residue. Zn(2+)-binding residues include His-279 and His-285. Asn-338 carries an N-linked (GlcNAc...) asparagine glycan. A lipid anchor (GPI-anchor amidated glycine) is attached at Gly-339. The propeptide at 340–364 (TVSHRFLSGNFIGYVLLVVGLILFL) is removed in mature form.

It belongs to the peptidase M10A family. Matrix metalloproteinases (MMPs) subfamily. The cofactor is Ca(2+). Requires Zn(2+) as cofactor. Mostly expressed in flowers, roots and stems, and, to a lower extent, in leaves.

The protein localises to the cell membrane. Its activity is regulated as follows. Inhibited by human TIMP-1 and TIMP-2 and by the peptide hydroxamate inhibitor (BB-94). Repressed by acetohydroxamic acid (AHA). Matrix metalloproteinases (MMPs) or matrixins may play a role in the degradation and remodeling of the extracellular matrix (ECM) during development or in response to stresses. Can cleave myelin basic protein as well as fluorigenic peptide substrates, McaPLANvaDpaAR-NH(2) and McaPChaGNvaHADpa-NH(2) 4-fold more efficiently than McaPLGLDpaAR-NH(2) (QF24). Active on myelin basic protein (MBP) and, to some extent, on McaPLGLDpaAR-NH(2) (QF24) and beta-casein. The protein is Metalloendoproteinase 1-MMP of Arabidopsis thaliana (Mouse-ear cress).